Reading from the N-terminus, the 216-residue chain is LexA repressor (216 aa).

Residues 28–48 (RAEIAAELGFSSANSAEEHLR) constitute a DNA-binding region (H-T-H motif). Catalysis depends on for autocatalytic cleavage activity residues Ser-134 and Lys-171.

Belongs to the peptidase S24 family. As to quaternary structure, homodimer.

The catalysed reaction is Hydrolysis of Ala-|-Gly bond in repressor LexA.. Functionally, represses a number of genes involved in the response to DNA damage (SOS response), including recA and lexA. In the presence of single-stranded DNA, RecA interacts with LexA causing an autocatalytic cleavage which disrupts the DNA-binding part of LexA, leading to derepression of the SOS regulon and eventually DNA repair. This Paraburkholderia phytofirmans (strain DSM 17436 / LMG 22146 / PsJN) (Burkholderia phytofirmans) protein is LexA repressor.